A 69-amino-acid chain; its full sequence is Magnetosome protein MamI (69 aa).

The Cytoplasmic segment spans residues 1–2 (MP). A helical membrane pass occupies residues 3-23 (SVIFGLLALAIGLLGLTAWWW). Over 24-31 (SVTEFLRG) the chain is Lumenal. Residues 32 to 52 (AVPVALIIFGLVALAAGVQSV) form a helical membrane-spanning segment. At 53 to 69 (RVPPAGKRANSDPNIDG) the chain is on the cytoplasmic side.

This sequence belongs to the magnetosome MamI protein family.

The protein localises to the magnetosome membrane. In terms of biological role, may be involved in an early stage of magnetosome nucleation. Not essential for formation of magnetosome membrane vesicles, it is probably functionally redundant with other proteins. May bind magnetite. One of 7 genes (mamLQBIEMO) able to induce magnetosome membrane biogenesis; coexpression of mamLQRBIEMO in a deletion of the 17 gene mamAB operon restores magnetosome vesicle formation but not magnetite biosynthesis. This Magnetospirillum gryphiswaldense (strain DSM 6361 / JCM 21280 / NBRC 15271 / MSR-1) protein is Magnetosome protein MamI.